A 146-amino-acid polypeptide reads, in one-letter code: Protein MucA (146 aa).

Active-site for autocatalytic cleavage activity residues include Ser62 and Lys99.

Belongs to the peptidase S24 family.

Functionally, involved in UV protection and mutation. This chain is Protein MucA (mucA), found in Escherichia coli.